Consider the following 1335-residue polypeptide: Membrane-associated phosphatidylinositol transfer protein 2 (1335 aa).

Disordered regions lie at residues 32–51 (ETHG…YTDG) and 262–341 (EEGP…SEEE). Residues 275–286 (KDQASGTTSDPG) are compositionally biased toward polar residues. The segment covering 299–319 (KQWSTSSKSSRSSKRGASPSR) has biased composition (low complexity). S334, S338, S365, and S586 each carry phosphoserine. Positions 606–657 (HCSGGSGGGGSGGSSLESSRHLSRSNIDIPRSNGTEDSRRQLPRKRSDSSTY) are disordered. The span at 609-618 (GGSGGGGSGG) shows a compositional bias: gly residues. Position 630 is a phosphoserine (S630). Residues 639–653 (GTEDSRRQLPRKRSD) are compositionally biased toward basic and acidic residues. A phosphoserine mark is found at S686, S687, and S688. One can recognise a DDHD domain in the interval 701–949 (FDFEIADLFL…VSFLLRQVMR (249 aa)). R814 bears the Omega-N-methylarginine mark. Residues 861-880 (ALPPPSPTTQGPRARARQVS) are disordered. S1263 carries the post-translational modification Phosphoserine. Residues 1282–1313 (TISAQPSGPSHRHDRTQTQMDSEQRGQRSMSV) are disordered. Polar residues predominate over residues 1298–1313 (QTQMDSEQRGQRSMSV).

Belongs to the PtdIns transfer protein family. PI transfer class IIA subfamily. Interacts with CPNE4 (via VWFA domain). Interacts with PTK2B via its C-terminus. As to expression, detected in retina and in the dentate gyrus of the cerebellum.

The protein localises to the endomembrane system. The protein resides in the cytoplasm. It localises to the cytoskeleton. Catalyzes the transfer of phosphatidylinositol and phosphatidylcholine between membranes (in vitro). Binds calcium ions. The chain is Membrane-associated phosphatidylinositol transfer protein 2 (Pitpnm2) from Mus musculus (Mouse).